The chain runs to 394 residues: Alpha-2B adrenergic receptor (394 aa).

A helical membrane pass occupies residues 1-25 (AIAAVITFLILFTIFGNALVILAVL). Residues 26–36 (TSRSLRAPQNL) are Cytoplasmic-facing. A helical transmembrane segment spans residues 37–62 (FLVSLAAADILVATLIIPFSLANELL). Over 63–72 (GYWYFRRTWC) the chain is Extracellular. Cys-72 and Cys-151 form a disulfide bridge. The chain crosses the membrane as a helical span at residues 73 to 95 (EVYLALDVLFCTSSIVHLCAISL). Residues 96–117 (DRYWAVSRALEYNCKRTPRRIK) lie on the Cytoplasmic side of the membrane. Residues 118-140 (CIILTVWLIAAAISLPPLIYKGD) traverse the membrane as a helical segment. Over 141–156 (QGPQPHGAPQCKLNQE) the chain is Extracellular. Residues 157–180 (AWYILSSSLGSFFVPCLIMILVYL) form a helical membrane-spanning segment. The Cytoplasmic portion of the chain corresponds to 181 to 358 (RIYLIAKRSH…LSREKRFTFV (178 aa)). The tract at residues 191–318 (RRGPRAKGGP…GSPPLQQPQG (128 aa)) is disordered. The span at 281-298 (LEEEAEEEEEEEEEEDEP) shows a compositional bias: acidic residues. Residues 299–312 (QAVPVSPASVGSPP) are compositionally biased toward low complexity. Residues 359 to 382 (LAVVIGVFVLCWFPFFFSYSLSAI) traverse the membrane as a helical segment. Over 383-391 (CPQQCRVPH) the chain is Extracellular. Residues 392 to 394 (GLF) form a helical membrane-spanning segment.

The protein belongs to the G-protein coupled receptor 1 family. Adrenergic receptor subfamily. ADRA2B sub-subfamily. In terms of assembly, interacts with RAB26. Interacts with PPP1R9B. Interacts with GGA1, GGA2 and GGA3.

The protein localises to the cell membrane. Its function is as follows. Alpha-2 adrenergic receptors mediate the catecholamine-induced inhibition of adenylate cyclase through the action of G proteins. The protein is Alpha-2B adrenergic receptor (ADRA2B) of Oryctolagus cuniculus (Rabbit).